A 287-amino-acid chain; its full sequence is Acetyl-coenzyme A carboxylase carboxyl transferase subunit beta (287 aa).

The region spanning 33 to 287 is the CoA carboxyltransferase N-terminal domain; sequence LFSKCPGCKH…TLLAFHGGQA (255 aa). 4 residues coordinate Zn(2+): C37, C40, C55, and C58. A C4-type zinc finger spans residues 37–58; sequence CPGCKHTIYQKDLGNDSVCPNC.

The protein belongs to the AccD/PCCB family. In terms of assembly, acetyl-CoA carboxylase is a heterohexamer composed of biotin carboxyl carrier protein (AccB), biotin carboxylase (AccC) and two subunits each of ACCase subunit alpha (AccA) and ACCase subunit beta (AccD). Zn(2+) is required as a cofactor.

The protein localises to the cytoplasm. The enzyme catalyses N(6)-carboxybiotinyl-L-lysyl-[protein] + acetyl-CoA = N(6)-biotinyl-L-lysyl-[protein] + malonyl-CoA. The protein operates within lipid metabolism; malonyl-CoA biosynthesis; malonyl-CoA from acetyl-CoA: step 1/1. Component of the acetyl coenzyme A carboxylase (ACC) complex. Biotin carboxylase (BC) catalyzes the carboxylation of biotin on its carrier protein (BCCP) and then the CO(2) group is transferred by the transcarboxylase to acetyl-CoA to form malonyl-CoA. The chain is Acetyl-coenzyme A carboxylase carboxyl transferase subunit beta from Streptococcus sanguinis (strain SK36).